Reading from the N-terminus, the 232-residue chain is Ribonuclease 3 (232 aa).

The RNase III domain maps to 2 to 135 (IKALEDDLSQ…FIGALYLDQG (134 aa)). Glu-48 contacts Mg(2+). Asp-52 is an active-site residue. Asp-121 and Glu-124 together coordinate Mg(2+). Glu-124 is an active-site residue. Residues 161–230 (DHKSELQELL…ANQALQLLRR (70 aa)) form the DRBM domain.

The protein belongs to the ribonuclease III family. As to quaternary structure, homodimer. Requires Mg(2+) as cofactor.

It localises to the cytoplasm. It carries out the reaction Endonucleolytic cleavage to 5'-phosphomonoester.. In terms of biological role, digests double-stranded RNA. Involved in the processing of primary rRNA transcript to yield the immediate precursors to the large and small rRNAs (23S and 16S). Processes some mRNAs, and tRNAs when they are encoded in the rRNA operon. Processes pre-crRNA and tracrRNA of type II CRISPR loci if present in the organism. This Pediococcus pentosaceus (strain ATCC 25745 / CCUG 21536 / LMG 10740 / 183-1w) protein is Ribonuclease 3.